The primary structure comprises 137 residues: Holo-[acyl-carrier-protein] synthase (137 aa).

2 residues coordinate Mg(2+): D8 and E57.

The protein belongs to the P-Pant transferase superfamily. AcpS family. Mg(2+) is required as a cofactor.

Its subcellular location is the cytoplasm. It catalyses the reaction apo-[ACP] + CoA = holo-[ACP] + adenosine 3',5'-bisphosphate + H(+). Its function is as follows. Transfers the 4'-phosphopantetheine moiety from coenzyme A to a Ser of acyl-carrier-protein. This is Holo-[acyl-carrier-protein] synthase from Cereibacter sphaeroides (strain ATCC 17023 / DSM 158 / JCM 6121 / CCUG 31486 / LMG 2827 / NBRC 12203 / NCIMB 8253 / ATH 2.4.1.) (Rhodobacter sphaeroides).